Reading from the N-terminus, the 365-residue chain is MAEKEVPLTAVKVDALVVMKIIKHSSQSFPTTATGSIVGMDVDGTLEITNSFPFPVVEMPADSHFDNAAPNPAAAAPRAKANVAYQAEMIRMLREVNVDANNVGWYTSANMGNFVNMNVIENQFFYQKEMNERTVALVHDVSRSAQGSLSLRAFRLSSKFMTAFKENKFTSEELQKSSLRHQDIFVELPVEIHNSHLITTFIHQLQCPSQSTPTDLPPSLAALEKSSFVKDSVLAPNFDNLSLSIDPFLEKNCDLLLDSIETHHTETNNFQYYQRSLAREQAKITAWQAKRKAENASRAALKQPLLPEDEYQRLFKLPQEPSRLETMLNTRQVEQYSRQIDSFVSATTGKMFAVKGNLLPGETAK.

The 150-residue stretch at 11–160 folds into the MPN domain; sequence VKVDALVVMK…LRAFRLSSKF (150 aa).

The protein belongs to the eIF-3 subunit H family. As to quaternary structure, component of the eukaryotic translation initiation factor 3 (eIF-3) complex.

It is found in the cytoplasm. Functionally, component of the eukaryotic translation initiation factor 3 (eIF-3) complex, which is involved in protein synthesis of a specialized repertoire of mRNAs and, together with other initiation factors, stimulates binding of mRNA and methionyl-tRNAi to the 40S ribosome. The eIF-3 complex specifically targets and initiates translation of a subset of mRNAs involved in cell proliferation. The chain is Eukaryotic translation initiation factor 3 subunit H from Aspergillus oryzae (strain ATCC 42149 / RIB 40) (Yellow koji mold).